The primary structure comprises 354 residues: Galactoside alpha-(1,2)-fucosyltransferase 2 (354 aa).

At 1–5 (MASAQ) the chain is on the cytoplasmic side. Residues 6–26 (VPFSFPLAHFLIFVFVTSTIT) form a helical; Signal-anchor for type II membrane protein membrane-spanning segment. The Lumenal portion of the chain corresponds to 27 to 354 (HLQQRIVKLQ…PADLSPLLKH (328 aa)). The interval 43–68 (LPMTTQMSSGNTESPEMRRDSEQHGN) is disordered. Positions 45–56 (MTTQMSSGNTES) are enriched in polar residues. The segment covering 57–68 (PEMRRDSEQHGN) has biased composition (basic and acidic residues). An N-linked (GlcNAc...) asparagine glycan is attached at asparagine 199.

Belongs to the glycosyltransferase 11 family. In terms of tissue distribution, specifically expressed in gut.

The protein resides in the golgi apparatus. The protein localises to the golgi stack membrane. It catalyses the reaction a beta-D-galactosyl-(1-&gt;3)-N-acetyl-beta-D-glucosaminyl derivative + GDP-beta-L-fucose = an alpha-L-Fuc-(1-&gt;2)-beta-D-Gal-(1-&gt;3)-beta-D-GlcNAc derivative + GDP + H(+). The enzyme catalyses a beta-D-galactosyl-(1-&gt;4)-N-acetyl-beta-D-glucosaminyl derivative + GDP-beta-L-fucose = an alpha-L-Fuc-(1-&gt;2)-beta-D-Gal-(1-&gt;4)-beta-D-GlcNAc derivative + GDP + H(+). It carries out the reaction a ganglioside GM1 (d18:1(4E)) + GDP-beta-L-fucose = a ganglioside Fuc-GM1 (d18:1(4E)) + GDP + H(+). The catalysed reaction is a globoside GalGb4Cer (d18:1(4E)) + GDP-beta-L-fucose = a globoside Globo-H (d18:1(4E)) + GDP + H(+). It catalyses the reaction a neolactoside nLc4Cer + GDP-beta-L-fucose = a neolactoside IV(2)-alpha-Fuc-nLc4Cer + GDP + H(+). The enzyme catalyses a neolactoside nLc4Cer(d18:1(4E)) + GDP-beta-L-fucose = a neolactoside IV(2)-alpha-Fuc-nLc4Cer(d18:1(4E)) + GDP + H(+). It carries out the reaction a ganglioside GM1 + GDP-beta-L-fucose = a ganglioside Fuc-GM1 + GDP + H(+). The catalysed reaction is a ganglioside GA1 + GDP-beta-L-fucose = a ganglioside Fuc-GA1 + GDP + H(+). It catalyses the reaction Lc4Cer + GDP-beta-L-fucose = alpha-L-fucosyl-(1-&gt;2)-beta-D-galactosyl-(1-&gt;3)-N-acetyl-beta-D-glucosaminyl-(1-&gt;3)-beta-D-galactosyl-(1-&gt;4)-beta-D-glucosyl-(1&lt;-&gt;1')-ceramide + GDP + H(+). The enzyme catalyses a beta-D-Gal-(1-&gt;3)-beta-D-GlcNAc-(1-&gt;3)-beta-D-Gal-(1-&gt;4)-beta-D-Glc-(1&lt;-&gt;1')-Cer(d18:1(4E)) + GDP-beta-L-fucose = alpha-L-fucosyl-(1-&gt;2)- beta-D-galactosyl-(1-&gt;3)-N-acetyl-beta-D-glucosaminyl-(1-&gt;3)-beta-D-galactosyl-(1-&gt;4)-beta-D-glucosyl-(1&lt;-&gt;1')-N-acylsphing-4-enine + GDP + H(+). It carries out the reaction a ganglioside GD1b + GDP-beta-L-fucose = a ganglioside Fuc-GD1b + GDP + H(+). The catalysed reaction is a lactoside III(4)-a-Fuc-Lc4Cer + GDP-beta-L-fucose = a lactoside IV(2),III(4)-a-[Fuc]2-Lc4Cer + GDP + H(+). It catalyses the reaction beta-D-galactosyl-(1-&gt;3)-N-acetyl-D-galactosamine + GDP-beta-L-fucose = alpha-L-fucosyl-(1-&gt;2)-beta-D-galactosyl-(1-&gt;3)-N-acetyl-D-galactosamine + GDP + H(+). Its pathway is protein modification; protein glycosylation. Its function is as follows. Catalyzes the transfer of L-fucose, from a guanosine diphosphate-beta-L-fucose, to the terminal galactose on both O- and N-linked glycans chains of cell surface glycoproteins and glycolipids and the resulting epitope regulates several processes such as cell-cell interaction including host-microbe interaction, cell surface expression and cell proliferation. Preferentially fucosylates gangliosides GA1 and GM1 in the antrum, cecum and colon and in the female reproductive organs. Fucosylated host glycoproteins or glycolipids mediate interaction with intestinal microbiota influencing its composition. Creates a soluble precursor oligosaccharide FuC-alpha ((1,2)Galbeta-) called the H antigen which is an essential substrate for the final step in the soluble ABO blood group antigen synthesis pathway. The protein is Galactoside alpha-(1,2)-fucosyltransferase 2 of Rattus norvegicus (Rat).